Consider the following 230-residue polypeptide: Protein-L-isoaspartate O-methyltransferase (230 aa).

Serine 68 is a catalytic residue.

This sequence belongs to the methyltransferase superfamily. L-isoaspartyl/D-aspartyl protein methyltransferase family.

The protein resides in the cytoplasm. The catalysed reaction is [protein]-L-isoaspartate + S-adenosyl-L-methionine = [protein]-L-isoaspartate alpha-methyl ester + S-adenosyl-L-homocysteine. Catalyzes the methyl esterification of L-isoaspartyl residues in peptides and proteins that result from spontaneous decomposition of normal L-aspartyl and L-asparaginyl residues. It plays a role in the repair and/or degradation of damaged proteins. In Salinibacter ruber (strain DSM 13855 / M31), this protein is Protein-L-isoaspartate O-methyltransferase.